The primary structure comprises 208 residues: UPF0637 protein BCAH820_3975 (208 aa).

It belongs to the UPF0637 family.

The chain is UPF0637 protein BCAH820_3975 from Bacillus cereus (strain AH820).